Reading from the N-terminus, the 148-residue chain is Large ribosomal subunit protein uL16 (148 aa).

The protein belongs to the universal ribosomal protein uL16 family. As to quaternary structure, part of the 50S ribosomal subunit.

Binds 23S rRNA and is also seen to make contacts with the A and possibly P site tRNAs. The chain is Large ribosomal subunit protein uL16 from Gloeobacter violaceus (strain ATCC 29082 / PCC 7421).